The following is a 373-amino-acid chain: MFVDSVELLISSGKGGAGAISFWTEKFVIKGGPDGGDGGRGGSVFFKVDNNTDTLSGLRGRNHIKAENGRPGEGRKKYGRKGQDTTIIVPPGTTVVDMETGEELLDLVEEGQVVKFLEGGKGGLGNMHFKSSTNQRPTYAQPGLPGITKQVRLEMKLIADVGLVGYPNVGKSTLIATLSNARPQVANYEFTTLTPKLGVVHISDYDSFMMADIPGIIEGASDGRGLGLEFLKHIERTKTLLLMIDAANYREMKYQYETLLVELDRYSETLAGRKHAIAITKIDSLSQDEVNTLTQTFLDDIGLKANDTLKKYKADMNYLSYGFKTDFGVPLPIKEPLFVLPISSVAHLNTEALRYALGDFVKNVKEETEAEEK.

The 158-residue stretch at 1 to 158 (MFVDSVELLI…KQVRLEMKLI (158 aa)) folds into the Obg domain. The tract at residues 62-83 (NHIKAENGRPGEGRKKYGRKGQ) is disordered. Residues 64-76 (IKAENGRPGEGRK) are compositionally biased toward basic and acidic residues. An OBG-type G domain is found at 159–362 (ADVGLVGYPN…LRYALGDFVK (204 aa)). Residues 165–172 (GYPNVGKS), 190–194 (FTTLT), 212–215 (DIPG), 280–283 (TKID), and 343–345 (SSV) contribute to the GTP site. 2 residues coordinate Mg(2+): Ser-172 and Thr-192.

Belongs to the TRAFAC class OBG-HflX-like GTPase superfamily. OBG GTPase family. Monomer. The cofactor is Mg(2+).

The protein resides in the cytoplasm. Its function is as follows. An essential GTPase which binds GTP, GDP and possibly (p)ppGpp with moderate affinity, with high nucleotide exchange rates and a fairly low GTP hydrolysis rate. Plays a role in control of the cell cycle, stress response, ribosome biogenesis and in those bacteria that undergo differentiation, in morphogenesis control. The sequence is that of GTPase Obg from Sulfurovum sp. (strain NBC37-1).